The chain runs to 84 residues: Small ribosomal subunit protein uS17 (84 aa).

Belongs to the universal ribosomal protein uS17 family. In terms of assembly, part of the 30S ribosomal subunit.

Its function is as follows. One of the primary rRNA binding proteins, it binds specifically to the 5'-end of 16S ribosomal RNA. The chain is Small ribosomal subunit protein uS17 from Legionella pneumophila (strain Paris).